We begin with the raw amino-acid sequence, 179 residues long: Transcription termination/antitermination protein NusG (179 aa).

A KOW domain is found at 130–157 (EGDVVQIIDGAFMGQEGRVVEIENNKVK).

It belongs to the NusG family.

Its function is as follows. Participates in transcription elongation, termination and antitermination. The polypeptide is Transcription termination/antitermination protein NusG (Streptococcus pyogenes serotype M1).